Reading from the N-terminus, the 299-residue chain is MSRGPSSAVLPSALGSRKLGPRSLSCLSDLDGGVALEPRACRPPGSPGRAPPPTPAPSGCDPRLRPIILRRARSLPSSPERRQKAAGAPGAACRPGCSQKLRVRFADALGLELAQVKVFNAGDDPSVPLHVLSRLAINSDLCCSSQDLEFTLHCLVPDFPPPVEAADFGERLQRQLVCLERVTCSDLGISGTVRVCNVAFEKQVAVRYTFSGWRSTHEAVARWRGPAGPEGTEDVFTFGFPVPPFLLELGSRVHFAVRYQVAGAEYWDNNDHRDYSLTCRNHALHMPRGECEESWIHFI.

The interval 1–22 (MSRGPSSAVLPSALGSRKLGPR) is disordered. Phosphoserine is present on residues serine 23, serine 25, and serine 28. The segment at 37–94 (EPRACRPPGSPGRAPPPTPAPSGCDPRLRPIILRRARSLPSSPERRQKAAGAPGAACR) is disordered. Over residues 44 to 56 (PGSPGRAPPPTPA) the composition is skewed to pro residues. The span at 57 to 67 (PSGCDPRLRPI) shows a compositional bias: low complexity. The residue at position 74 (serine 74) is a Phosphoserine. The span at 85-94 (AAGAPGAACR) shows a compositional bias: low complexity. Positions 101 to 104 (LRVR) match the PP1-binding motif motif. Serine 133 carries the post-translational modification Phosphoserine. The CBM21 domain maps to 169–278 (GERLQRQLVC…NNDHRDYSLT (110 aa)).

As to quaternary structure, interacts with PPP1CC catalytic subunit of PP1, and associates with glycogen. Interacts with EPM2A; in the presence of NHLC1/malin the interaction leads to PPP1R3D ubiquitination and autophagic degradation. In terms of tissue distribution, expressed in all tissues tested. High expression in skeletal muscle and heart.

In terms of biological role, seems to act as a glycogen-targeting subunit for PP1. PP1 is essential for cell division, and participates in the regulation of glycogen metabolism, muscle contractility and protein synthesis. The polypeptide is Protein phosphatase 1 regulatory subunit 3D (PPP1R3D) (Homo sapiens (Human)).